Consider the following 244-residue polypeptide: 1-(5-phosphoribosyl)-5-[(5-phosphoribosylamino)methylideneamino] imidazole-4-carboxamide isomerase (244 aa).

The Proton acceptor role is filled by aspartate 8. The Proton donor role is filled by aspartate 129.

The protein belongs to the HisA/HisF family.

Its subcellular location is the cytoplasm. The catalysed reaction is 1-(5-phospho-beta-D-ribosyl)-5-[(5-phospho-beta-D-ribosylamino)methylideneamino]imidazole-4-carboxamide = 5-[(5-phospho-1-deoxy-D-ribulos-1-ylimino)methylamino]-1-(5-phospho-beta-D-ribosyl)imidazole-4-carboxamide. Its pathway is amino-acid biosynthesis; L-histidine biosynthesis; L-histidine from 5-phospho-alpha-D-ribose 1-diphosphate: step 4/9. This chain is 1-(5-phosphoribosyl)-5-[(5-phosphoribosylamino)methylideneamino] imidazole-4-carboxamide isomerase, found in Maricaulis maris (strain MCS10) (Caulobacter maris).